The sequence spans 265 residues: 4-hydroxy-tetrahydrodipicolinate reductase (265 aa).

Residues 7–12 (GASGRM) and Asp-33 contribute to the NAD(+) site. Arg-34 contacts NADP(+). NAD(+) contacts are provided by residues 96–98 (GTT) and 120–123 (AANM). His-153 (proton donor/acceptor) is an active-site residue. His-154 contributes to the (S)-2,3,4,5-tetrahydrodipicolinate binding site. Lys-157 (proton donor) is an active-site residue. 163-164 (GT) is a binding site for (S)-2,3,4,5-tetrahydrodipicolinate.

The protein belongs to the DapB family.

It is found in the cytoplasm. The enzyme catalyses (S)-2,3,4,5-tetrahydrodipicolinate + NAD(+) + H2O = (2S,4S)-4-hydroxy-2,3,4,5-tetrahydrodipicolinate + NADH + H(+). It carries out the reaction (S)-2,3,4,5-tetrahydrodipicolinate + NADP(+) + H2O = (2S,4S)-4-hydroxy-2,3,4,5-tetrahydrodipicolinate + NADPH + H(+). The protein operates within amino-acid biosynthesis; L-lysine biosynthesis via DAP pathway; (S)-tetrahydrodipicolinate from L-aspartate: step 4/4. In terms of biological role, catalyzes the conversion of 4-hydroxy-tetrahydrodipicolinate (HTPA) to tetrahydrodipicolinate. This chain is 4-hydroxy-tetrahydrodipicolinate reductase, found in Burkholderia lata (strain ATCC 17760 / DSM 23089 / LMG 22485 / NCIMB 9086 / R18194 / 383).